Reading from the N-terminus, the 470-residue chain is Argininosuccinate lyase (470 aa).

Belongs to the lyase 1 family. Argininosuccinate lyase subfamily.

The protein localises to the cytoplasm. It carries out the reaction 2-(N(omega)-L-arginino)succinate = fumarate + L-arginine. It participates in amino-acid biosynthesis; L-arginine biosynthesis; L-arginine from L-ornithine and carbamoyl phosphate: step 3/3. This is Argininosuccinate lyase from Mycobacterium tuberculosis (strain ATCC 25618 / H37Rv).